The primary structure comprises 747 residues: Polyribonucleotide nucleotidyltransferase (747 aa).

The Mg(2+) site is built by aspartate 487 and aspartate 493. A KH domain is found at 554–613 (PSTTTIKIDKDKIRDIIGPGGKIIKEICETSGAKIDISDDGTVSVYAADRDKLKIASDKI). In terms of domain architecture, S1 motif spans 623–691 (GEIFNGTVTK…NKGKAKLTIK (69 aa)). A disordered region spans residues 694-716 (DKDKSLNNPKPQNSINNAKENSE). A compositionally biased stretch (polar residues) spans 699–712 (LNNPKPQNSINNAK).

Belongs to the polyribonucleotide nucleotidyltransferase family. It depends on Mg(2+) as a cofactor.

The protein resides in the cytoplasm. The enzyme catalyses RNA(n+1) + phosphate = RNA(n) + a ribonucleoside 5'-diphosphate. Involved in mRNA degradation. Catalyzes the phosphorolysis of single-stranded polyribonucleotides processively in the 3'- to 5'-direction. This chain is Polyribonucleotide nucleotidyltransferase, found in Rickettsia canadensis (strain McKiel).